A 49-amino-acid polypeptide reads, in one-letter code: uncharacterized protein (49 aa).

A helical membrane pass occupies residues 6-28 (IYPLTVFYFFAIEMSVFCYYNWF).

Its subcellular location is the membrane. This is an uncharacterized protein from Saccharomyces cerevisiae (strain ATCC 204508 / S288c) (Baker's yeast).